A 330-amino-acid chain; its full sequence is Cathepsin K (330 aa).

The first 16 residues, methionine 1–alanine 16, serve as a signal peptide directing secretion. Positions leucine 17–arginine 115 are cleaved as a propeptide — activation peptide. Residue asparagine 104 is glycosylated (N-linked (GlcNAc...) asparagine). Cystine bridges form between cysteine 137-cysteine 178, cysteine 171-cysteine 211, and cysteine 270-cysteine 319. Cysteine 140 is an active-site residue. Catalysis depends on residues histidine 277 and asparagine 297.

The protein belongs to the peptidase C1 family.

It localises to the lysosome. The protein localises to the secreted. Its subcellular location is the apical cell membrane. It carries out the reaction Broad proteolytic activity. With small-molecule substrates and inhibitors, the major determinant of specificity is P2, which is preferably Leu, Met &gt; Phe, and not Arg.. In terms of biological role, thiol protease involved in osteoclastic bone resorption and may participate partially in the disorder of bone remodeling. Displays potent endoprotease activity against fibrinogen at acid pH. May play an important role in extracellular matrix degradation. Involved in the release of thyroid hormone thyroxine (T4) by limited proteolysis of TG/thyroglobulin in the thyroid follicle lumen. The sequence is that of Cathepsin K (CTSK) from Canis lupus familiaris (Dog).